Reading from the N-terminus, the 653-residue chain is Acetyl-coenzyme A synthetase (653 aa).

Residues 195 to 198 and Thr-314 each bind CoA; that span reads RGGK. Residues 390 to 392, 414 to 419, Asp-505, and Arg-520 each bind ATP; these read GEP and DTWWQT. A CoA-binding site is contributed by Ser-528. Position 531 (Arg-531) interacts with ATP. Residues Val-542 and Val-547 each contribute to the Mg(2+) site. Residue Lys-617 is modified to N6-acetyllysine.

Belongs to the ATP-dependent AMP-binding enzyme family. Mg(2+) serves as cofactor. Post-translationally, acetylated. Deacetylation by the SIR2-homolog deacetylase activates the enzyme.

The enzyme catalyses acetate + ATP + CoA = acetyl-CoA + AMP + diphosphate. Catalyzes the conversion of acetate into acetyl-CoA (AcCoA), an essential intermediate at the junction of anabolic and catabolic pathways. AcsA undergoes a two-step reaction. In the first half reaction, AcsA combines acetate with ATP to form acetyl-adenylate (AcAMP) intermediate. In the second half reaction, it can then transfer the acetyl group from AcAMP to the sulfhydryl group of CoA, forming the product AcCoA. The polypeptide is Acetyl-coenzyme A synthetase (Pasteurella multocida (strain Pm70)).